A 467-amino-acid chain; its full sequence is tRNA-2-methylthio-N(6)-dimethylallyladenosine synthase (467 aa).

Residues Gly-22–Thr-138 form the MTTase N-terminal domain. The [4Fe-4S] cluster site is built by Cys-31, Cys-67, Cys-101, Cys-173, Cys-177, and Cys-180. The region spanning Arg-159–Glu-396 is the Radical SAM core domain. The 69-residue stretch at Val-399–Asn-467 folds into the TRAM domain.

The protein belongs to the methylthiotransferase family. MiaB subfamily. As to quaternary structure, monomer. [4Fe-4S] cluster is required as a cofactor.

It localises to the cytoplasm. The catalysed reaction is N(6)-dimethylallyladenosine(37) in tRNA + (sulfur carrier)-SH + AH2 + 2 S-adenosyl-L-methionine = 2-methylsulfanyl-N(6)-dimethylallyladenosine(37) in tRNA + (sulfur carrier)-H + 5'-deoxyadenosine + L-methionine + A + S-adenosyl-L-homocysteine + 2 H(+). Functionally, catalyzes the methylthiolation of N6-(dimethylallyl)adenosine (i(6)A), leading to the formation of 2-methylthio-N6-(dimethylallyl)adenosine (ms(2)i(6)A) at position 37 in tRNAs that read codons beginning with uridine. The polypeptide is tRNA-2-methylthio-N(6)-dimethylallyladenosine synthase (Prochlorococcus marinus (strain MIT 9211)).